Here is a 288-residue protein sequence, read N- to C-terminus: 33 kDa chaperonin (288 aa).

2 disulfide bridges follow: C236/C238 and C269/C272.

This sequence belongs to the HSP33 family. Under oxidizing conditions two disulfide bonds are formed involving the reactive cysteines. Under reducing conditions zinc is bound to the reactive cysteines and the protein is inactive.

The protein localises to the cytoplasm. Functionally, redox regulated molecular chaperone. Protects both thermally unfolding and oxidatively damaged proteins from irreversible aggregation. Plays an important role in the bacterial defense system toward oxidative stress. This chain is 33 kDa chaperonin, found in Lactococcus lactis subsp. cremoris (strain SK11).